Reading from the N-terminus, the 250-residue chain is Probable transcriptional regulatory protein Plut_1643 (250 aa).

The protein belongs to the TACO1 family.

The protein resides in the cytoplasm. This Chlorobium luteolum (strain DSM 273 / BCRC 81028 / 2530) (Pelodictyon luteolum) protein is Probable transcriptional regulatory protein Plut_1643.